We begin with the raw amino-acid sequence, 307 residues long: N-acetylmuramic acid 6-phosphate etherase (307 aa).

The 164-residue stretch at 62 to 225 (IVSSFNRGGR…STASMIRIGK (164 aa)) folds into the SIS domain. Residue Glu-90 is the Proton donor of the active site. The active site involves Glu-121.

Belongs to the GCKR-like family. MurNAc-6-P etherase subfamily. Homodimer.

The catalysed reaction is N-acetyl-D-muramate 6-phosphate + H2O = N-acetyl-D-glucosamine 6-phosphate + (R)-lactate. It participates in amino-sugar metabolism; 1,6-anhydro-N-acetylmuramate degradation. It functions in the pathway amino-sugar metabolism; N-acetylmuramate degradation. The protein operates within cell wall biogenesis; peptidoglycan recycling. In terms of biological role, specifically catalyzes the cleavage of the D-lactyl ether substituent of MurNAc 6-phosphate, producing GlcNAc 6-phosphate and D-lactate. Together with AnmK, is also required for the utilization of anhydro-N-acetylmuramic acid (anhMurNAc) either imported from the medium or derived from its own cell wall murein, and thus plays a role in cell wall recycling. The sequence is that of N-acetylmuramic acid 6-phosphate etherase from Pseudoalteromonas atlantica (strain T6c / ATCC BAA-1087).